Consider the following 485-residue polypeptide: Pelle-like serine/threonine-protein kinase pik-1 (485 aa).

A compositionally biased stretch (polar residues) spans 115–132; the sequence is TSRVSKQMVQPPGSQSAS. Positions 115–155 are disordered; that stretch reads TSRVSKQMVQPPGSQSASRLKKTEIKESSPSPAAAAASQLS. Low complexity predominate over residues 142-152; that stretch reads SSPSPAAAAAS. Residues 185-485 enclose the Protein kinase domain; the sequence is FAVSNVIGKG…LCKNSIPPVV (301 aa). ATP contacts are provided by residues 191–199 and Lys214; that span reads IGKGGYGTV. Asp318 functions as the Proton acceptor in the catalytic mechanism.

Belongs to the protein kinase superfamily. TKL Ser/Thr protein kinase family. Pelle subfamily. In terms of assembly, interacts with actl-1. As to expression, expressed in the nervous system.

It catalyses the reaction L-seryl-[protein] + ATP = O-phospho-L-seryl-[protein] + ADP + H(+). The catalysed reaction is L-threonyl-[protein] + ATP = O-phospho-L-threonyl-[protein] + ADP + H(+). Its function is as follows. Through association with the adapter actl-1, may act downstream of the receptor complex composed of ilcr-1 and ilcr-2, which is a signaling complex that modulates neuronal activity and animal behavior in response to sensory neuron input. This Caenorhabditis elegans protein is Pelle-like serine/threonine-protein kinase pik-1.